The following is a 381-amino-acid chain: Cytochrome b (381 aa).

4 consecutive transmembrane segments (helical) span residues 32 to 52 (GGSL…LLAM), 76 to 98 (MILR…LHVL), 113 to 133 (VWIS…IGYV), and 179 to 199 (FYSF…FHIA). Heme b is bound by residues H82 and H96. Heme b contacts are provided by H183 and H197. H202 contributes to the a ubiquinone binding site. 4 helical membrane passes run 225–245 (FGAK…ILVF), 289–309 (AMGV…PFIG), 318–338 (ITEW…WLGG), and 345–365 (TSFV…VCQP).

The protein belongs to the cytochrome b family. As to quaternary structure, the main subunits of complex b-c1 are: cytochrome b, cytochrome c1 and the Rieske protein. Heme b is required as a cofactor.

The protein localises to the mitochondrion inner membrane. Functionally, component of the ubiquinol-cytochrome c reductase complex (complex III or cytochrome b-c1 complex) that is part of the mitochondrial respiratory chain. The b-c1 complex mediates electron transfer from ubiquinol to cytochrome c. Contributes to the generation of a proton gradient across the mitochondrial membrane that is then used for ATP synthesis. The protein is Cytochrome b (MT-CYB) of Chlamydomonas reinhardtii (Chlamydomonas smithii).